A 369-amino-acid chain; its full sequence is UPF0754 membrane protein Aflv_2299 (369 aa).

2 consecutive transmembrane segments (helical) span residues 1-21 (MGLFLYLLFMIVVGAFIGGMT) and 347-367 (YLGALLGGIIGLIQGCITFFV).

This sequence belongs to the UPF0754 family.

It localises to the cell membrane. The protein is UPF0754 membrane protein Aflv_2299 of Anoxybacillus flavithermus (strain DSM 21510 / WK1).